The primary structure comprises 280 residues: Cobalt import ATP-binding protein CbiO (280 aa).

The ABC transporter domain maps to 2–236; the sequence is IEVRDLRFHY…GDWLRQQGLG (235 aa). 36-43 serves as a coordination point for ATP; the sequence is GANGCGKT.

It belongs to the ABC transporter superfamily. Cobalt importer (TC 3.A.1.18.1) family. In terms of assembly, forms an energy-coupling factor (ECF) transporter complex composed of an ATP-binding protein (A component, CbiO), a transmembrane protein (T component, CbiQ) and 2 possible substrate-capture proteins (S components, CbiM and CbiN) of unknown stoichimetry.

The protein resides in the cell inner membrane. Its pathway is cofactor biosynthesis; adenosylcobalamin biosynthesis. Functionally, part of the energy-coupling factor (ECF) transporter complex CbiMNOQ involved in cobalt import. Presumably responsible for energy coupling to the transport system. The protein is Cobalt import ATP-binding protein CbiO of Syntrophus aciditrophicus (strain SB).